The chain runs to 99 residues: U11-barytoxin-Tl1a (99 aa).

Residues 1-21 (MKTLVLVAVLGLASLYLLSYA) form the signal peptide. A propeptide spanning residues 22–50 (SEVQQISRDEEDFRALMASFGGIFDTEER) is cleaved from the precursor. Disulfide bonds link Cys57-Cys71, Cys64-Cys76, and Cys70-Cys90.

This sequence belongs to the neurotoxin 10 (Hwtx-1) family. 25 (ICK4) subfamily. In terms of tissue distribution, expressed by the venom gland.

Its subcellular location is the secreted. In terms of biological role, ion channel inhibitor. The sequence is that of U11-barytoxin-Tl1a from Trittame loki (Brush-footed trapdoor spider).